A 367-amino-acid polypeptide reads, in one-letter code: rRNA processing protein RCL1 (367 aa).

The residue at position 2 (serine 2) is an N-acetylserine.

It belongs to the RNA 3'-terminal cyclase family. Type 2 subfamily. As to quaternary structure, interacts directly with BMS1 and the U3 snoRNA to form a stable subcomplex. Component of the 90S small subunit processome also known as 90S pre-ribosome that consists of the 35S pre-rRNA, early-associating ribosomal proteins most of which are part of the small ribosomal subunit, the U3 snoRNA and associated proteins.

The protein localises to the nucleus. The protein resides in the nucleolus. In terms of biological role, does not have cyclase activity. Plays a role in 40S-ribosomal-subunit biogenesis in the early pre-rRNA processing steps at sites A0, A1 and A2 that are required for proper maturation of the 18S RNA. RCL1 activates BMS1 by promoting GDP/GTP exchange. The chain is rRNA processing protein RCL1 (RCL1) from Saccharomyces cerevisiae (strain ATCC 204508 / S288c) (Baker's yeast).